We begin with the raw amino-acid sequence, 254 residues long: Wall-associated protein (254 aa).

Residues 25 to 46 (DRVEPKEEPPKVPQAPKRDLKP) form a disordered region.

The protein localises to the secreted. It is found in the cell wall. The chain is Wall-associated protein (wapA') from Geobacillus stearothermophilus (Bacillus stearothermophilus).